The primary structure comprises 407 residues: Keratin, type I cuticular Ha2 (407 aa).

The interval Met-1–Glu-55 is head. The 312-residue stretch at Glu-55–Leu-366 folds into the IF rod domain. The segment at Lys-56 to Val-90 is coil 1A. The tract at residues Tyr-91–Asp-101 is linker 1. The segment at Tyr-102–Gln-202 is coil 1B. The segment at Gln-203–Val-218 is linker 12. A coil 2 region spans residues Asp-219–Glu-362. The segment at Asp-363–Tyr-407 is tail.

The protein belongs to the intermediate filament family. Cuticle of the hair shaft.

The chain is Keratin, type I cuticular Ha2 (Krt32) from Mus musculus (Mouse).